Reading from the N-terminus, the 190-residue chain is Hypoxanthine/guanine phosphoribosyltransferase (190 aa).

It belongs to the purine/pyrimidine phosphoribosyltransferase family. Archaeal HPRT subfamily. As to quaternary structure, homodimer.

The protein localises to the cytoplasm. It carries out the reaction IMP + diphosphate = hypoxanthine + 5-phospho-alpha-D-ribose 1-diphosphate. It catalyses the reaction GMP + diphosphate = guanine + 5-phospho-alpha-D-ribose 1-diphosphate. It functions in the pathway purine metabolism; IMP biosynthesis via salvage pathway; IMP from hypoxanthine: step 1/1. In terms of biological role, catalyzes a salvage reaction resulting in the formation of IMP that is energically less costly than de novo synthesis. In Methanosarcina barkeri (strain Fusaro / DSM 804), this protein is Hypoxanthine/guanine phosphoribosyltransferase.